A 548-amino-acid polypeptide reads, in one-letter code: 5-epi-aristolochene synthase 2 (548 aa).

The Mg(2+) site is built by D301, D305, D444, T448, and E452. Positions 301-305 (DDTFD) match the DDXXD motif motif.

This sequence belongs to the terpene synthase family. In terms of assembly, monomer. It depends on Mg(2+) as a cofactor. In terms of tissue distribution, expressed in roots, but not in shoots.

The protein localises to the cytoplasm. The catalysed reaction is (2E,6E)-farnesyl diphosphate = (+)-5-epi-aristolochene + diphosphate. Its pathway is secondary metabolite biosynthesis; terpenoid biosynthesis. Its function is as follows. Catalyzes the cyclization of trans,trans-farnesyl diphosphate (FPP) to the bicyclic intermediate 5-epi-aristolochene, initial step in the conversion of FPP to the sesquiterpenoid antifungal phytoalexin capsidiol. Produces germacrene A as an enzyme-bound intermediate that is not released by the enzyme, but is further cyclized to produce the bicyclic 5-epi-aristolochene. The chain is 5-epi-aristolochene synthase 2 from Nicotiana attenuata (Coyote tobacco).